A 399-amino-acid polypeptide reads, in one-letter code: Cytohesin-3 (399 aa).

Residues 14 to 61 are a coiled coil; the sequence is EDLSLEEREELLDIRRRKKELIDDIERLKYEIAEVMTEIDNLTSVEES. Positions 77–206 constitute an SEC7 domain; the sequence is FNMDPKKGIQ…IIMLNTSLHN (130 aa). Residues 264–380 enclose the PH domain; that stretch reads NPDREGWLLK…WMKSIKASIS (117 aa). A 1,2-diacyl-sn-glycero-3-phospho-(1D-myo-inositol-3,4,5-trisphosphate)-binding positions include 273–280, Arg-284, Tyr-295, Arg-305, and Asn-354; that span reads KLGGRVKT. The tract at residues 391 to 399 is C-terminal autoinhibitory region; sequence RKRRIANKK.

In terms of assembly, interacts with TAMALIN. Interacts with FRMD4A. Interacts with FRMD4B.

It localises to the cytoplasm. The protein resides in the cytosol. Its subcellular location is the cell membrane. The protein localises to the cell junction. It is found in the adherens junction. It localises to the tight junction. Its function is as follows. Promotes guanine-nucleotide exchange on ARF1. Promotes the activation of ARF factors through replacement of GDP with GTP. Plays a role in the epithelial polarization. In Mus musculus (Mouse), this protein is Cytohesin-3 (Cyth3).